Here is a 347-residue protein sequence, read N- to C-terminus: 3-keto-steroid reductase ERG27 (347 aa).

NADP(+) is bound by residues leucine 15, threonine 38, and arginine 44. Residues serine 179 and tyrosine 202 each act as proton donor in the active site. NADP(+) is bound by residues tyrosine 202, lysine 206, and serine 237. Lysine 206 functions as the Lowers pKa of active site Tyr in the catalytic mechanism. Threonine 345 carries the post-translational modification Phosphothreonine.

It belongs to the short-chain dehydrogenases/reductases (SDR) family. ERG27 subfamily. As to quaternary structure, heterotetramer of ERG25, ERG26, ERG27 and ERG28. ERG28 acts as a scaffold to tether ERG27 and other 4,4-demethylation-related enzymes, forming a demethylation enzyme complex, in the endoplasmic reticulum. Interacts with ERG25 and ERG28. Also interacts with ERG7, but only in lipid particles.

It localises to the endoplasmic reticulum membrane. The protein resides in the lipid droplet. It catalyses the reaction 3-dehydro-4alpha-methylzymosterol + NADPH + H(+) = 4alpha-methylzymosterol + NADP(+). Its pathway is steroid biosynthesis; zymosterol biosynthesis; zymosterol from lanosterol: step 5/6. Its function is as follows. 3-keto-steroid reductase; part of the third module of ergosterol biosynthesis pathway that includes the late steps of the pathway. ERG27 is a catalytic component of the C-4 demethylation complex that catalyze the reduction of the keto group on the C-3. The third module or late pathway involves the ergosterol synthesis itself through consecutive reactions that mainly occur in the endoplasmic reticulum (ER) membrane. Firstly, the squalene synthase ERG9 catalyzes the condensation of 2 farnesyl pyrophosphate moieties to form squalene, which is the precursor of all steroids. Squalene synthase is crucial for balancing the incorporation of farnesyl diphosphate (FPP) into sterol and nonsterol isoprene synthesis. Secondly, the squalene epoxidase ERG1 catalyzes the stereospecific oxidation of squalene to (S)-2,3-epoxysqualene, which is considered to be a rate-limiting enzyme in steroid biosynthesis. Then, the lanosterol synthase ERG7 catalyzes the cyclization of (S)-2,3 oxidosqualene to lanosterol, a reaction that forms the sterol core. In the next steps, lanosterol is transformed to zymosterol through a complex process involving various demethylation, reduction and desaturation reactions. The lanosterol 14-alpha-demethylase ERG11 (also known as CYP51) catalyzes C14-demethylation of lanosterol to produce 4,4'-dimethyl cholesta-8,14,24-triene-3-beta-ol, which is critical for ergosterol biosynthesis. The C-14 reductase ERG24 reduces the C14=C15 double bond of 4,4-dimethyl-cholesta-8,14,24-trienol to produce 4,4-dimethyl-cholesta-8,24-dienol. 4,4-dimethyl-cholesta-8,24-dienol is substrate of the C-4 demethylation complex ERG25-ERG26-ERG27 in which ERG25 catalyzes the three-step monooxygenation required for the demethylation of 4,4-dimethyl and 4alpha-methylsterols, ERG26 catalyzes the oxidative decarboxylation that results in a reduction of the 3-beta-hydroxy group at the C-3 carbon to an oxo group, and ERG27 is responsible for the reduction of the keto group on the C-3. ERG28 has a role as a scaffold to help anchor ERG25, ERG26 and ERG27 to the endoplasmic reticulum and ERG29 regulates the activity of the iron-containing C4-methylsterol oxidase ERG25. Then, the sterol 24-C-methyltransferase ERG6 catalyzes the methyl transfer from S-adenosyl-methionine to the C-24 of zymosterol to form fecosterol. The C-8 sterol isomerase ERG2 catalyzes the reaction which results in unsaturation at C-7 in the B ring of sterols and thus converts fecosterol to episterol. The sterol-C5-desaturase ERG3 then catalyzes the introduction of a C-5 double bond in the B ring to produce 5-dehydroepisterol. The C-22 sterol desaturase ERG5 further converts 5-dehydroepisterol into ergosta-5,7,22,24(28)-tetraen-3beta-ol by forming the C-22(23) double bond in the sterol side chain. Finally, ergosta-5,7,22,24(28)-tetraen-3beta-ol is substrate of the C-24(28) sterol reductase ERG4 to produce ergosterol. In terms of biological role, facilitates the association of ERG7 with lipid particles preventing its digestion in the endoplasmic reticulum and the lipid particles. This is 3-keto-steroid reductase ERG27 from Saccharomyces cerevisiae (strain ATCC 204508 / S288c) (Baker's yeast).